A 237-amino-acid polypeptide reads, in one-letter code: Ribonuclease PH (237 aa).

Phosphate is bound by residues Arg-86 and 124-126; that span reads GTR.

Belongs to the RNase PH family. In terms of assembly, homohexameric ring arranged as a trimer of dimers.

It catalyses the reaction tRNA(n+1) + phosphate = tRNA(n) + a ribonucleoside 5'-diphosphate. Functionally, phosphorolytic 3'-5' exoribonuclease that plays an important role in tRNA 3'-end maturation. Removes nucleotide residues following the 3'-CCA terminus of tRNAs; can also add nucleotides to the ends of RNA molecules by using nucleoside diphosphates as substrates, but this may not be physiologically important. Probably plays a role in initiation of 16S rRNA degradation (leading to ribosome degradation) during starvation. This is Ribonuclease PH from Cereibacter sphaeroides (strain ATCC 17029 / ATH 2.4.9) (Rhodobacter sphaeroides).